A 203-amino-acid chain; its full sequence is Tic20 family protein Ycf60 (203 aa).

5 helical membrane-spanning segments follow: residues 2–22 (IRLFTFAIITVFLIVISRLAL), 51–71 (TVPYYLPLFEGLQNFGQYVLP), 84–104 (IILPMLIFYMNHAILGLVTFF), 131–151 (ILLFLVGSLFGAVFRAFPIEF), and 153–173 (ISFLGLMVCNMMFWFVLSTIT).

The protein belongs to the Tic20 family.

It localises to the plastid. Its subcellular location is the chloroplast membrane. This chain is Tic20 family protein Ycf60 (ycf60), found in Pyropia yezoensis (Susabi-nori).